Reading from the N-terminus, the 321-residue chain is Mitochondrial coenzyme A transporter SLC25A42 (321 aa).

Solcar repeat units follow at residues 33 to 119 (RSVL…YKGI), 131 to 216 (LPPV…LKKT), and 226 to 314 (PFPY…TQIL). A run of 6 helical transmembrane segments spans residues 35–55 (VLNS…AVAP), 91–111 (LWRG…IQFC), 137–154 (LLAG…TYPL), 191–208 (GFTP…LSFF), 232–252 (LVFG…LDVV), and 295–315 (VKGP…QILL).

This sequence belongs to the mitochondrial carrier (TC 2.A.29) family.

Its subcellular location is the mitochondrion inner membrane. It carries out the reaction ADP(out) + CoA(in) = ADP(in) + CoA(out). The catalysed reaction is 3'-dephospho-CoA(in) + ADP(out) = 3'-dephospho-CoA(out) + ADP(in). The enzyme catalyses adenosine 3',5'-bisphosphate(in) + ADP(out) = adenosine 3',5'-bisphosphate(out) + ADP(in). It catalyses the reaction AMP(in) + ADP(out) = AMP(out) + ADP(in). It carries out the reaction dADP(in) + ADP(out) = dADP(out) + ADP(in). The catalysed reaction is ADP(in) + ATP(out) = ADP(out) + ATP(in). Functionally, mitochondrial carrier mediating the transport of coenzyme A (CoA) in mitochondria in exchange for intramitochondrial (deoxy)adenine nucleotides and adenosine 3',5'-diphosphate. The chain is Mitochondrial coenzyme A transporter SLC25A42 (slc25a42) from Danio rerio (Zebrafish).